We begin with the raw amino-acid sequence, 296 residues long: Fructose-bisphosphate aldolase class 1 (296 aa).

Glu175 (proton acceptor) is an active-site residue. Lys212 (schiff-base intermediate with dihydroxyacetone-P) is an active-site residue.

It belongs to the class I fructose-bisphosphate aldolase family.

The catalysed reaction is beta-D-fructose 1,6-bisphosphate = D-glyceraldehyde 3-phosphate + dihydroxyacetone phosphate. It functions in the pathway carbohydrate degradation; glycolysis; D-glyceraldehyde 3-phosphate and glycerone phosphate from D-glucose: step 4/4. The chain is Fructose-bisphosphate aldolase class 1 from Staphylococcus epidermidis (strain ATCC 35984 / DSM 28319 / BCRC 17069 / CCUG 31568 / BM 3577 / RP62A).